The chain runs to 442 residues: UDP-N-acetylglucosamine--peptide N-acetylglucosaminyltransferase stabilizing protein GtfB (442 aa).

It belongs to the GtfB family. In terms of assembly, interacts with glycosyltransferase GtfA (Gtf1). Interacts with glycosyltransferase GtfA; probably forms a heterotetramer with 2 subunits each of GtfA and GtfB. Part of the accessory SecA2/SecY2 protein translocation apparatus.

It is found in the cell membrane. It functions in the pathway protein modification; protein glycosylation. Required for the polymorphic O-glycosylation of the serine-rich repeat protein Srr2. A stabilizing protein that is part of the accessory SecA2/SecY2 system specifically required to export serine-rich repeat proteins, probably Srr2 in this organism. The GtfA-GtfB (Gtf1-Gtf2 in this bacteria) complex adds GlcNAc from UDP-GlcNAc to Srr2 substrate, attaching the first sugar residue. Stabilizes the glycosylation activity of GtfA in vivo. Upon expression in a gtfB deletion mutant of S.parasanguis, GtfB confers incorrect glycosylation and partial complementation of a biofilm formation defect, while GtfA/GtfB restores correct expression of serine-rich repeat protein Fap1 and completely restores a biofilm formation defect in a S.parasanguis double gtfA-gtfB deletion. In Streptococcus agalactiae, this protein is UDP-N-acetylglucosamine--peptide N-acetylglucosaminyltransferase stabilizing protein GtfB.